Reading from the N-terminus, the 318-residue chain is Ribosomal RNA small subunit methyltransferase H (318 aa).

S-adenosyl-L-methionine is bound by residues 42 to 44 (GGH), D62, F86, D108, and Q115.

The protein belongs to the methyltransferase superfamily. RsmH family.

It is found in the cytoplasm. It catalyses the reaction cytidine(1402) in 16S rRNA + S-adenosyl-L-methionine = N(4)-methylcytidine(1402) in 16S rRNA + S-adenosyl-L-homocysteine + H(+). Its function is as follows. Specifically methylates the N4 position of cytidine in position 1402 (C1402) of 16S rRNA. This is Ribosomal RNA small subunit methyltransferase H from Yersinia pestis (strain Pestoides F).